Reading from the N-terminus, the 711-residue chain is T-box transcription factor TBX2 (711 aa).

The segment at residues 109 to 287 (LEAKELWDQF…NNPFAKGFRD (179 aa)) is a DNA-binding region (T-box). Positions 313–449 (PERDGAESDA…GEGKEPSLAP (137 aa)) are disordered. Residues 326-340 (DPPPAREPPPSPSAA) show a composition bias toward pro residues. Phosphoserine is present on residues S336, S342, and S360. 3 stretches are compositionally biased toward basic and acidic residues: residues 363 to 372 (EPERTGEERS), 390 to 409 (TEPE…KEPT), and 421 to 444 (SLEK…EGKE). Positions 518 to 602 (GSGSSGGAGP…ATSAAAAAAA (85 aa)) are repression domain 1 (RD1). A phosphoserine mark is found at S623, S652, S656, and S675. The segment at 640 to 687 (TGLAAEGSKGGNSREPSPLPELALRKVGGPSRGALSPSGSAKEAASEL) is disordered.

Binds DNA as a monomer. Interacts with CHD4, HDAC1 and HDAC2, perhaps as components of a NuRD-like complex. Interacts with CBX3, HMGB2 and PBX1. Interacts with PML. Post-translationally, phosphorylated. May be phosphorylated by p38 MAPK in response to UV irradiation stress. In terms of tissue distribution, in adults, highest levels in lung. Also found in heart, kidney, and ovary.

The protein resides in the nucleus. Transcription factor which acts as a transcriptional repressor. May also function as a transcriptional activator. Binds to the palindromic T site 5'-TTCACACCTAGGTGTGAA-3' DNA sequence, or a half-site, which are present in the regulatory region of several genes. Required for cardiac atrioventricular canal formation. May cooperate with NKX2.5 to negatively modulate expression of NPPA/ANF in the atrioventricular canal. May play a role as a positive regulator of TGFB2 expression, perhaps acting in concert with GATA4 in the developing outflow tract myocardium. Plays a role in limb pattern formation. Acts as a transcriptional repressor of ADAM10 gene expression, perhaps in concert with histone deacetylase HDAC1 as cofactor. Involved in branching morphogenesis in both developing lungs and adult mammary glands, via negative modulation of target genes; acting redundantly with TBX3. Required, together with TBX3, to maintain cell proliferation in the embryonic lung mesenchyme; perhaps acting downstream of SHH, BMP and TGFbeta signaling. Involved in modulating early inner ear development, acting independently of, and also redundantly with TBX3, in different subregions of the developing ear. Acts as a negative regulator of PML function in cellular senescence. Acts as a negative regulator of expression of CDKN1A/p21, IL33 and CCN4; repression of CDKN1A is enhanced in response to UV-induced stress, perhaps as a result of phosphorylation by p38 MAPK. Negatively modulates expression of CDKN2A/p19ARF and CDH1/E-cadherin. Plays a role in induction of the epithelial-mesenchymal transition (EMT). Plays a role in melanocyte proliferation, perhaps via regulation of cyclin CCND1. Involved in melanogenesis, acting via negative modulation of expression of DHICA oxidase/TYRP1 and P protein/OCA2. Involved in regulating retinal pigment epithelium (RPE) cell proliferation, perhaps via negatively modulating transcription of the transcription factor CEBPD. This chain is T-box transcription factor TBX2 (Tbx2), found in Mus musculus (Mouse).